Reading from the N-terminus, the 264-residue chain is Apolipoprotein A-I (264 aa).

The N-terminal stretch at 1–18 (MKAVLLVVAALFLAGSQA) is a signal peptide. Repeat copies occupy residues 67-88 (LRLS…ADFG) and 89-110 (LATQ…QIVS). The segment at 67–264 (LRLSDNWDTL…DQASKQLAAQ (198 aa)) is 10 X approximate tandem repeats. One copy of the 3; half-length repeat lies at 111-121 (EDLQDVKHKVQ). Repeat copies occupy residues 122 to 143 (PYLE…EKVR), 144 to 165 (PLGI…EKLT), and 166 to 187 (PLGE…TQLA). One copy of the 7; truncated repeat lies at 188 to 207 (PFSEEMRQRLAKRLEELKDS). A Methionine sulfoxide modification is found at Met-193. Residues 208 to 229 (ATLADYHAKASEHLKMLGEKAK) form repeat 8. Residues 230–240 (PALEDLRQGLL) form a 9; half-length repeat. Repeat 10 spans residues 241-264 (PVLENLKASILSSIDQASKQLAAQ).

The protein belongs to the apolipoprotein A1/A4/E family. As to quaternary structure, homodimer. Interacts with APOA1BP and CLU. Component of a sperm activating protein complex (SPAP), consisting of APOA1, an immunoglobulin heavy chain, an immunoglobulin light chain and albumin. Interacts with NDRG1. Interacts with SCGB3A2. Interacts with NAXE and YJEFN3. Glycosylated. In terms of processing, palmitoylated. Post-translationally, phosphorylation sites are present in the extracellular medium.

Its subcellular location is the secreted. Functionally, participates in the reverse transport of cholesterol from tissues to the liver for excretion by promoting cholesterol efflux from tissues and by acting as a cofactor for the lecithin cholesterol acyltransferase (LCAT). As part of the SPAP complex, activates spermatozoa motility. The polypeptide is Apolipoprotein A-I (APOA1) (Cavia aperea (Brazilian guinea pig)).